A 290-amino-acid polypeptide reads, in one-letter code: ATP synthase gamma chain (290 aa).

Belongs to the ATPase gamma chain family. In terms of assembly, F-type ATPases have 2 components, CF(1) - the catalytic core - and CF(0) - the membrane proton channel. CF(1) has five subunits: alpha(3), beta(3), gamma(1), delta(1), epsilon(1). CF(0) has three main subunits: a, b and c.

The protein localises to the cell inner membrane. In terms of biological role, produces ATP from ADP in the presence of a proton gradient across the membrane. The gamma chain is believed to be important in regulating ATPase activity and the flow of protons through the CF(0) complex. In Chlorobium luteolum (strain DSM 273 / BCRC 81028 / 2530) (Pelodictyon luteolum), this protein is ATP synthase gamma chain.